The sequence spans 277 residues: Putative phosphoenolpyruvate synthase regulatory protein (277 aa).

157–164 contacts ADP; that stretch reads GVSRCGKT.

This sequence belongs to the pyruvate, phosphate/water dikinase regulatory protein family. PSRP subfamily.

It catalyses the reaction [pyruvate, water dikinase] + ADP = [pyruvate, water dikinase]-phosphate + AMP + H(+). The catalysed reaction is [pyruvate, water dikinase]-phosphate + phosphate + H(+) = [pyruvate, water dikinase] + diphosphate. In terms of biological role, bifunctional serine/threonine kinase and phosphorylase involved in the regulation of the phosphoenolpyruvate synthase (PEPS) by catalyzing its phosphorylation/dephosphorylation. The sequence is that of Putative phosphoenolpyruvate synthase regulatory protein from Klebsiella pneumoniae (strain 342).